The following is a 214-amino-acid chain: Ribosomal RNA large subunit methyltransferase E (214 aa).

Residues Gly-68, Trp-70, Asp-88, Asp-104, and Asp-129 each coordinate S-adenosyl-L-methionine. Residue Lys-169 is the Proton acceptor of the active site.

The protein belongs to the class I-like SAM-binding methyltransferase superfamily. RNA methyltransferase RlmE family.

It localises to the cytoplasm. The catalysed reaction is uridine(2552) in 23S rRNA + S-adenosyl-L-methionine = 2'-O-methyluridine(2552) in 23S rRNA + S-adenosyl-L-homocysteine + H(+). In terms of biological role, specifically methylates the uridine in position 2552 of 23S rRNA at the 2'-O position of the ribose in the fully assembled 50S ribosomal subunit. The polypeptide is Ribosomal RNA large subunit methyltransferase E (Magnetococcus marinus (strain ATCC BAA-1437 / JCM 17883 / MC-1)).